We begin with the raw amino-acid sequence, 434 residues long: Glutamate-1-semialdehyde 2,1-aminomutase (434 aa).

At Lys274 the chain carries N6-(pyridoxal phosphate)lysine.

Belongs to the class-III pyridoxal-phosphate-dependent aminotransferase family. HemL subfamily. Homodimer. The cofactor is pyridoxal 5'-phosphate.

The protein localises to the cytoplasm. It carries out the reaction (S)-4-amino-5-oxopentanoate = 5-aminolevulinate. The protein operates within porphyrin-containing compound metabolism; protoporphyrin-IX biosynthesis; 5-aminolevulinate from L-glutamyl-tRNA(Glu): step 2/2. The protein is Glutamate-1-semialdehyde 2,1-aminomutase of Acidovorax ebreus (strain TPSY) (Diaphorobacter sp. (strain TPSY)).